Here is a 521-residue protein sequence, read N- to C-terminus: Anaerobic nitric oxide reductase flavorubredoxin (521 aa).

The interval 30–210 (HKGTSYNSYL…PFSPLVTAKI (181 aa)) is zinc metallo-hydrolase. Residues His-79, Glu-81, Asp-83, His-147, Asp-166, and His-227 each contribute to the Fe cation site. The 140-residue stretch at 254-393 (ITLFYDSMSN…LCREHGRQLA (140 aa)) folds into the Flavodoxin-like domain. FMN contacts are provided by residues 260 to 264 (SMSNN) and 342 to 369 (AFGS…DISI). One can recognise a Rubredoxin-like domain in the interval 464–515 (DQPMLCTVCQWIYDPALGEPDQLVAPGTPWARVPDSFLCPGCGIGKEVFEPC). The Fe cation site is built by Cys-469, Cys-472, Cys-502, and Cys-505.

The protein in the N-terminal section; belongs to the zinc metallo-hydrolase group 3 family. As to quaternary structure, homotetramer. Fe cation serves as cofactor. The cofactor is FMN.

The protein resides in the cytoplasm. The protein operates within nitrogen metabolism; nitric oxide reduction. Anaerobic nitric oxide reductase; uses NADH to detoxify nitric oxide (NO), protecting several 4Fe-4S NO-sensitive enzymes. Has at least 2 reductase partners, only one of which (NorW, flavorubredoxin reductase) has been identified. NO probably binds to the di-iron center; electrons enter from the NorW at rubredoxin and are transferred sequentially to the FMN center and the di-iron center. Also able to function as an aerobic oxygen reductase. The sequence is that of Anaerobic nitric oxide reductase flavorubredoxin from Aeromonas salmonicida (strain A449).